The sequence spans 450 residues: Chromosomal replication initiator protein DnaA (450 aa).

Residues Met1 to Leu84 form a domain I, interacts with DnaA modulators region. Residues Leu84–Ser109 are domain II. The segment at Asp110–Ala328 is domain III, AAA+ region. Residues Gly154, Gly156, Lys157, and Thr158 each coordinate ATP. A domain IV, binds dsDNA region spans residues Asn329–Lys450.

Belongs to the DnaA family. Oligomerizes as a right-handed, spiral filament on DNA at oriC.

It localises to the cytoplasm. In terms of biological role, plays an essential role in the initiation and regulation of chromosomal replication. ATP-DnaA binds to the origin of replication (oriC) to initiate formation of the DNA replication initiation complex once per cell cycle. Binds the DnaA box (a 9 base pair repeat at the origin) and separates the double-stranded (ds)DNA. Forms a right-handed helical filament on oriC DNA; dsDNA binds to the exterior of the filament while single-stranded (ss)DNA is stabiized in the filament's interior. The ATP-DnaA-oriC complex binds and stabilizes one strand of the AT-rich DNA unwinding element (DUE), permitting loading of DNA polymerase. After initiation quickly degrades to an ADP-DnaA complex that is not apt for DNA replication. Binds acidic phospholipids. This chain is Chromosomal replication initiator protein DnaA, found in Streptococcus equi subsp. zooepidemicus (strain H70).